The following is an 831-amino-acid chain: Replication restart protein PriA (831 aa).

One can recognise a Helicase ATP-binding domain in the interval 304 to 471 (VLPLQGYHQV…HRHQNDPQRH (168 aa)). Residue 317–324 (GVTGSGKT) participates in ATP binding. Residues 413–416 (DEEH) carry the DEAH box motif. Cys537, Cys540, Cys546, Cys549, Cys568, Cys571, Cys581, and Cys584 together coordinate Zn(2+). The Helicase C-terminal domain occupies 575–735 (EIQPKVCPEC…ELPQREMLNY (161 aa)).

Belongs to the helicase family. PriA subfamily. As to quaternary structure, component of the replication restart primosome. Zn(2+) serves as cofactor.

The catalysed reaction is Couples ATP hydrolysis with the unwinding of duplex DNA by translocating in the 3'-5' direction.. It carries out the reaction ATP + H2O = ADP + phosphate + H(+). In terms of biological role, initiates the restart of stalled replication forks, which reloads the replicative helicase on sites other than the origin of replication. Recognizes and binds to abandoned replication forks and remodels them to uncover a helicase loading site. Promotes assembly of the primosome at these replication forks. The protein is Replication restart protein PriA of Synechocystis sp. (strain ATCC 27184 / PCC 6803 / Kazusa).